A 660-amino-acid polypeptide reads, in one-letter code: DNA mismatch repair protein MutL (660 aa).

The segment at 414–433 (SSVKHASRPQNTFTETDHPN) is disordered.

This sequence belongs to the DNA mismatch repair MutL/HexB family.

Functionally, this protein is involved in the repair of mismatches in DNA. It is required for dam-dependent methyl-directed DNA mismatch repair. May act as a 'molecular matchmaker', a protein that promotes the formation of a stable complex between two or more DNA-binding proteins in an ATP-dependent manner without itself being part of a final effector complex. In Streptococcus pyogenes serotype M5 (strain Manfredo), this protein is DNA mismatch repair protein MutL.